Here is a 758-residue protein sequence, read N- to C-terminus: Probable adenosylcobalamin-dependent ribonucleoside-triphosphate reductase (758 aa).

Cysteines 194 and 459 form a disulfide. Residues Ile-233–Gly-256 form a disordered region. Catalysis depends on residues Cys-448 and Glu-450.

The protein belongs to the class II ribonucleoside-triphosphate reductase family. As to quaternary structure, monomer. Adenosylcob(III)alamin is required as a cofactor.

The catalysed reaction is a 2'-deoxyribonucleoside 5'-triphosphate + [thioredoxin]-disulfide + H2O = a ribonucleoside 5'-triphosphate + [thioredoxin]-dithiol. The chain is Probable adenosylcobalamin-dependent ribonucleoside-triphosphate reductase (rtpR) from Dictyostelium discoideum (Social amoeba).